The primary structure comprises 170 residues: CASP-like protein 2D1 (170 aa).

Topologically, residues 1–4 (MLKL) are cytoplasmic. The helical transmembrane segment at 5–25 (LDFSLRLSVIPLSVATIWLTV) threads the bilayer. Topologically, residues 26–47 (TNKQDNSIYGYLKYSDLTGLKY) are extracellular. Residues 48-68 (MVFISGICASYAFIAAVSTWI) traverse the membrane as a helical segment. Over 69-83 (RCIVTKTWLFFVSDQ) the chain is Cytoplasmic. The helical transmembrane segment at 84 to 104 (IVAYLMVTSGTAVLEILYLAY) threads the bilayer. At 105-127 (NGDREVSWSEACTSYGKFCYRMK) the chain is on the extracellular side. The helical transmembrane segment at 128–148 (LAVILHALALSCFIILAVISA) threads the bilayer. At 149–170 (YRAFSIFEPPLVPSKVVEEDRA) the chain is on the cytoplasmic side.

It belongs to the Casparian strip membrane proteins (CASP) family. In terms of assembly, homodimer and heterodimers.

It is found in the cell membrane. The chain is CASP-like protein 2D1 from Populus trichocarpa (Western balsam poplar).